A 138-amino-acid chain; its full sequence is Membrane glycoprotein UL139 (138 aa).

A signal peptide spans 1 to 15; the sequence is MLWILVLFALAASAS. Residues 17-37 form a disordered region; the sequence is TTTGTSSNSSQSTSAGTTNTT. Residues 64–84 form a helical membrane-spanning segment; the sequence is GWTLSGLLLIFTCCLCCFWLV. Residues 113-129 show a composition bias toward polar residues; that stretch reads SDATLPMGTTGSYTPPQ. The disordered stretch occupies residues 113 to 138; sequence SDATLPMGTTGSYTPPQDGSFPPPPR.

It is found in the host membrane. The sequence is that of Membrane glycoprotein UL139 (UL139) from Homo sapiens (Human).